The sequence spans 315 residues: Methionyl-tRNA formyltransferase (315 aa).

114-117 provides a ligand contact to (6S)-5,6,7,8-tetrahydrofolate; sequence SLLP.

Belongs to the Fmt family.

It carries out the reaction L-methionyl-tRNA(fMet) + (6R)-10-formyltetrahydrofolate = N-formyl-L-methionyl-tRNA(fMet) + (6S)-5,6,7,8-tetrahydrofolate + H(+). Attaches a formyl group to the free amino group of methionyl-tRNA(fMet). The formyl group appears to play a dual role in the initiator identity of N-formylmethionyl-tRNA by promoting its recognition by IF2 and preventing the misappropriation of this tRNA by the elongation apparatus. The sequence is that of Methionyl-tRNA formyltransferase from Corynebacterium glutamicum (strain R).